We begin with the raw amino-acid sequence, 313 residues long: Phenylalanine-4-hydroxylase (313 aa).

Fe cation is bound by residues H154, H159, and E200.

The protein belongs to the biopterin-dependent aromatic amino acid hydroxylase family. It depends on Fe(2+) as a cofactor.

It carries out the reaction (6R)-L-erythro-5,6,7,8-tetrahydrobiopterin + L-phenylalanine + O2 = (4aS,6R)-4a-hydroxy-L-erythro-5,6,7,8-tetrahydrobiopterin + L-tyrosine. The protein operates within amino-acid degradation; L-phenylalanine degradation; acetoacetate and fumarate from L-phenylalanine: step 1/6. The protein is Phenylalanine-4-hydroxylase (phhA) of Ralstonia nicotianae (strain ATCC BAA-1114 / GMI1000) (Ralstonia solanacearum).